The chain runs to 101 residues: Putative defensin-like protein 86 (101 aa).

An N-terminal signal peptide occupies residues 1-27 (MAITKMSSLIILSLMMLTFIYIPMISG). 4 cysteine pairs are disulfide-bonded: cysteine 35–cysteine 71, cysteine 39–cysteine 59, cysteine 45–cysteine 69, and cysteine 49–cysteine 70.

The protein belongs to the DEFL family.

It is found in the secreted. This Arabidopsis thaliana (Mouse-ear cress) protein is Putative defensin-like protein 86 (LCR82).